The sequence spans 488 residues: Metalloreductase STEAP3 (488 aa).

Over 1 to 207 the chain is Cytoplasmic; sequence MSGEMDKPLI…AREVEAIPLR (207 aa). Phosphoserine is present on residues S11, S17, and S20. NADP(+)-binding positions include 36-39, 58-59, 91-98, N116, and A151; these read SGDF, SR, and VFREHYSS. Positions 152 and 160 each coordinate FAD. A helical transmembrane segment spans residues 208–228; sequence LLPSWKVPTLLALGLFVCFYA. Fe(3+) is bound at residue Y229. At 229–258 the chain is on the vesicular side; sequence YNFIRDVLQPYIRKDENKFYKMPLSVVNTT. An N-linked (GlcNAc...) asparagine glycan is attached at N256. The chain crosses the membrane as a helical span at residues 259–279; sequence LPCVAYVLLSLVYLPGVLAAA. One can recognise a Ferric oxidoreductase domain in the interval 259–407; the sequence is LPCVAYVLLS…LGFVALMLST (149 aa). The Cytoplasmic portion of the chain corresponds to 280–304; the sequence is LQLRRGTKYQRFPDWLDHWLQHRKQ. 3 residues coordinate FAD: Q281, R302, and K303. The helical transmembrane segment at 305-325 threads the bilayer; it reads IGLLSFFFAMLHALYSFCLPL. H316 contributes to the heme b binding site. A Fe(3+)-binding site is contributed by Y319. Residues 326-358 lie on the Vesicular side of the membrane; it reads RRSHRYDLVNLAVKQVLANKSRLWVEEEVWRME. Residues 359-379 form a helical membrane-spanning segment; it reads IYLSLGVLALGMLSLLAVTSI. S378 contacts FAD. At 380-390 the chain is on the cytoplasmic side; it reads PSIANSLNWKE. Residues 391–411 traverse the membrane as a helical segment; it reads FSFVQSTLGFVALMLSTMHTL. Q395 is an FAD binding site. H409 contributes to the heme b binding site. Over 412–433 the chain is Vesicular; that stretch reads TYGWTRAFEENHYKFYLPPTFT. Residues 434–454 form a helical membrane-spanning segment; sequence LTLLLPCVIILAKGLFLLPCL. Residues 455–488 lie on the Cytoplasmic side of the membrane; it reads SHRLTKIRRGWERDGAVKFMLPAGHTQGEKTSHV. Position 486 is a phosphoserine (S486).

This sequence belongs to the STEAP family. Homodimer. Interacts with BNIP3L, MYT1, RHBDL4/RHBDD1 and TCTP. Requires FAD as cofactor. It depends on heme b as a cofactor. Proteolytically cleaved by RHBDL4/RHBDD1. RHBDL4/RHBDD1-induced cleavage occurs at multiple sites in a glycosylation-independent manner. In terms of processing, glycosylated.

Its subcellular location is the endosome membrane. The enzyme catalyses 2 Fe(2+) + NADP(+) + H(+) = 2 Fe(3+) + NADPH. The catalysed reaction is 2 Cu(+) + NADP(+) + H(+) = 2 Cu(2+) + NADPH. Its function is as follows. Integral membrane protein that functions as a NADPH-dependent ferric-chelate reductase, using NADPH from one side of the membrane to reduce a Fe(3+) chelate that is bound on the other side of the membrane. Mediates sequential transmembrane electron transfer from NADPH to FAD and onto heme, and finally to the Fe(3+) chelate. Can also reduce Cu(2+) to Cu(1+). Mediates efficient transferrin-dependent iron uptake in erythroid cells. May play a role downstream of p53/TP53 to interface apoptosis and cell cycle progression. Indirectly involved in exosome secretion by facilitating the secretion of proteins such as TCTP. The protein is Metalloreductase STEAP3 (Steap3) of Rattus norvegicus (Rat).